The primary structure comprises 256 residues: 5'-nucleotidase SurE (256 aa).

A divalent metal cation-binding residues include Asp-8, Asp-9, Ser-42, and Asn-94.

It belongs to the SurE nucleotidase family. The cofactor is a divalent metal cation.

The protein resides in the cytoplasm. It carries out the reaction a ribonucleoside 5'-phosphate + H2O = a ribonucleoside + phosphate. Nucleotidase that shows phosphatase activity on nucleoside 5'-monophosphates. In Ehrlichia chaffeensis (strain ATCC CRL-10679 / Arkansas), this protein is 5'-nucleotidase SurE.